A 152-amino-acid chain; its full sequence is Protein X (152 aa).

Positions 68–115 (PCALRFTSATWRCMETPMNSVTCLRKRTLGLRTAPPTVMEQYIKDCLF) are mitochondrial targeting sequence.

This sequence belongs to the orthohepadnavirus protein X family. May form homodimer. May interact with host CEBPA, CFLAR, CREB1, DDB1, E4F1, HBXIP, HSPD1/HSP60, NFKBIA, POLR2E and SMAD4. Interacts with host SMC5-SMC6 complex and induces its degradation. Interacts with host TRPC4AP; leading to prevent ubiquitination of TRPC4AP. Interacts with host PLSCR1; this interaction promotes ubiquitination and degradation of HBx and impairs HBx-mediated cell proliferation. Post-translationally, a fraction may be phosphorylated in insect cells and HepG2 cells, a human hepatoblastoma cell line. Phosphorylated in vitro by host protein kinase C or mitogen-activated protein kinase. N-acetylated in insect cells.

Its subcellular location is the host cytoplasm. It is found in the host nucleus. The protein localises to the host mitochondrion. In terms of biological role, multifunctional protein that plays a role in silencing host antiviral defenses and promoting viral transcription. Does not seem to be essential for HBV infection. May be directly involved in development of cirrhosis and liver cancer (hepatocellular carcinoma). Most of cytosolic activities involve modulation of cytosolic calcium. The effect on apoptosis is controversial depending on the cell types in which the studies have been conducted. May induce apoptosis by localizing in mitochondria and causing loss of mitochondrial membrane potential. May also modulate apoptosis by binding host CFLAR, a key regulator of the death-inducing signaling complex (DISC). Promotes viral transcription by using the host E3 ubiquitin ligase DDB1 to target the SMC5-SMC6 complex to proteasomal degradation. This host complex would otherwise bind to viral episomal DNA, and prevents its transcription. Moderately stimulates transcription of many different viral and cellular transcription elements. Promoters and enhancers stimulated by HBx contain DNA binding sites for NF-kappa-B, AP-1, AP-2, c-EBP, ATF/CREB, or the calcium-activated factor NF-AT. The chain is Protein X from Lagothrix lagotricha (Brown woolly monkey).